The sequence spans 352 residues: Small ribosomal subunit biogenesis GTPase RsgA (352 aa).

Residues 1-11 (MTKRKLSKGQQ) are compositionally biased toward basic residues. Residues 1-35 (MTKRKLSKGQQRRVQENHKKRLQSKEKKNHVELDD) are disordered. Residues 13 to 33 (RVQENHKKRLQSKEKKNHVEL) are compositionally biased toward basic and acidic residues. Residues 114-276 (YYDGIKPIAA…VIDSPGVREF (163 aa)) form the CP-type G domain. Residues 162-165 (NKVD) and 216-224 (GQSGVGKSS) each bind GTP. Positions 300, 305, 307, and 313 each coordinate Zn(2+).

It belongs to the TRAFAC class YlqF/YawG GTPase family. RsgA subfamily. In terms of assembly, monomer. Associates with 30S ribosomal subunit, binds 16S rRNA. It depends on Zn(2+) as a cofactor.

The protein resides in the cytoplasm. Functionally, one of several proteins that assist in the late maturation steps of the functional core of the 30S ribosomal subunit. Helps release RbfA from mature subunits. May play a role in the assembly of ribosomal proteins into the subunit. Circularly permuted GTPase that catalyzes slow GTP hydrolysis, GTPase activity is stimulated by the 30S ribosomal subunit. This Proteus mirabilis (strain HI4320) protein is Small ribosomal subunit biogenesis GTPase RsgA.